The sequence spans 507 residues: RNA-binding protein Nova-1 (507 aa).

The disordered stretch occupies residues 1 to 44; sequence MMAAAPIQQNGTHTGVPIDLDPPDSRKRPLEAPPEAGSTKRTNT. Positions 27-43 match the Bipartite nuclear localization signal motif; the sequence is KRPLEAPPEAGSTKRTN. The KH 1 domain maps to 49–116; that stretch reads QYFLKVLIPS…EALNAVHGFI (68 aa). Positions 139–171 are disordered; the sequence is QTTVNPDRIKQTLPSSPTTTKSSPSDPMTTSRA. The segment covering 150–169 has biased composition (low complexity); sequence TLPSSPTTTKSSPSDPMTTS. At serine 154 the chain carries Phosphoserine. KH domains lie at 171-237 and 421-488; these read ANQV…VELI and KDVV…QYLI. The required for RNA binding stretch occupies residues 419–503; that stretch reads GSKDVVEIAV…YEQGVRAANP (85 aa).

Interacts with PTBP2; the interaction is direct. As to expression, expressed in cerebellum, brain stem, hippocampus, and frontal cortex.

The protein localises to the nucleus. Functionally, functions to regulate alternative splicing in neurons by binding pre-mRNA in a sequence-specific manner to activate exon inclusion or exclusion. It binds specifically to the sequences 5'-YCAY-3' and regulates splicing in only a subset of regulated exons. Binding to an exonic 5'-YCAY-3' cluster changes the protein complexes assembled on pre-mRNA, blocking U1 snRNP binding and exon inclusion, whereas binding to an intronic 5'-YCAY-3' cluster enhances spliceosome assembly and exon inclusion. Binding to 5'-YCAY-3' clusters results in a local and asymmetric action to regulate spliceosome assembly and alternative splicing in neurons. Binding to an exonic 5'-YCAY-3' cluster changed the protein complexes assembled on pre-mRNA, blocking U1 snRNP (small nuclear ribonucleoprotein) binding and exon inclusion, whereas binding to an intronic 5'-YCAY-3' cluster enhanced spliceosome assembly and exon inclusion. With NOVA1, they perform unique biological functions in different brain areas and cell types. Autoregulates its own expression by acting as a splicing repressor. Acts to activate the inclusion of exon E3A in the glycine receptor alpha-2 chain and of exon E9 in gamma-aminobutyric-acid receptor gamma-2 subunit via a distal downstream UCAU-rich intronic splicing enhancer. Acts to regulate a novel glycine receptor alpha-2 chain splice variant (alpha-2N) in developing spinal cord. The sequence is that of RNA-binding protein Nova-1 from Homo sapiens (Human).